We begin with the raw amino-acid sequence, 276 residues long: Probable ribose-5-phosphate isomerase 3, chloroplastic (276 aa).

A chloroplast-targeting transit peptide spans 1–39 (MASLSFVSSSHLTLRTPSIALRSTGSSPRTSVSFSVKAQ). S40 is subject to N-acetylserine. Position 108 is a phosphoserine (S108).

The protein belongs to the ribose 5-phosphate isomerase family. Phosphorylated by SRK2C.

It localises to the plastid. Its subcellular location is the chloroplast. The catalysed reaction is aldehydo-D-ribose 5-phosphate = D-ribulose 5-phosphate. It functions in the pathway carbohydrate degradation; pentose phosphate pathway; D-ribose 5-phosphate from D-ribulose 5-phosphate (non-oxidative stage): step 1/1. In terms of biological role, catalyzes the reversible conversion of ribose-5-phosphate to ribulose 5-phosphate. This Arabidopsis thaliana (Mouse-ear cress) protein is Probable ribose-5-phosphate isomerase 3, chloroplastic (RPI3).